An 821-amino-acid chain; its full sequence is uncharacterized protein (821 aa).

10 disordered regions span residues 1–20, 55–96, 134–205, 240–263, 274–293, 360–381, 430–450, 467–497, 512–535, and 549–641; these read MGQT…TTSS, SENY…EAYS, SYDF…NNEH, RLHQ…RSSW, PEEF…TPLN, NVLQ…ESNS, TSED…NESR, EFST…SQAF, RNLF…NQPT, and AQEP…SNQT. 2 stretches are compositionally biased toward polar residues: residues 58-88 and 185-203; these read YADT…CSTQ and SLPS…SINN. Residues 279–293 show a composition bias toward polar residues; sequence NASNPEAHSNFTPLN. Polar residues predominate over residues 437–450; sequence TMTQENQSLHNESR. Low complexity-rich tracts occupy residues 517–529 and 568–578; these read TSNS…SSFS and SSLLDSSNSNS. Over residues 579–622 the composition is skewed to polar residues; sequence QRPFSTVPSESNVFSRNASGNFSMSQTHQPTTDNTSSFSTQPGR. An RING-type; atypical zinc finger spans residues 766–809; sequence CLICLETYTNGDICRKLQACKHFFHQACIDQWLTTGNNSCPLCR.

This is an uncharacterized protein from Schizosaccharomyces pombe (strain 972 / ATCC 24843) (Fission yeast).